Here is a 498-residue protein sequence, read N- to C-terminus: Resveratrol cleavage oxygenase 1 (498 aa).

Piceatannol-binding residues include tyrosine 105 and lysine 136. 2 residues coordinate trans-resveratrol: tyrosine 105 and lysine 136. Residues histidine 169, histidine 220, and histidine 285 each contribute to the Fe cation site. Glutamate 355 contacts piceatannol. Glutamate 355 lines the trans-resveratrol pocket. A Fe cation-binding site is contributed by histidine 481.

It belongs to the carotenoid oxygenase family. It depends on Fe(2+) as a cofactor.

It carries out the reaction trans-resveratrol + O2 = 3,5-dihydroxybenzaldehyde + 4-hydroxybenzaldehyde. The catalysed reaction is piceatannol + O2 = 3,5-dihydroxybenzaldehyde + 3,4-dihydroxybenzaldehyde. Dioxygenase that cleaves the interphenyl C-alpha-C-beta double bond of resveratrol to yield 3,5-dihydroxybenzaldehyde and 4-hydroxybenzaldehyde. Also cleaves piceatannol, a compound that differs from resveratrol only in the occurrence of an additional hydroxyl group, which leads to the production of 3,4-dihydroxybenzaldehyde and 3,5-hydroxybenzaldehyde. The protein is Resveratrol cleavage oxygenase 1 of Aspergillus fumigatus (strain ATCC MYA-4609 / CBS 101355 / FGSC A1100 / Af293) (Neosartorya fumigata).